The primary structure comprises 542 residues: 2,3-bisphosphoglycerate-independent phosphoglycerate mutase (542 aa).

Positions 24 and 74 each coordinate Mn(2+). Catalysis depends on Ser74, which acts as the Phosphoserine intermediate. Substrate is bound by residues His135, 165 to 166, Arg197, Arg203, 268 to 271, and Lys341; these read RD and RPDR. Mn(2+) is bound by residues Asp408, His412, Asp449, His450, and His467.

Belongs to the BPG-independent phosphoglycerate mutase family. Monomer. The cofactor is Mn(2+).

It carries out the reaction (2R)-2-phosphoglycerate = (2R)-3-phosphoglycerate. It participates in carbohydrate degradation; glycolysis; pyruvate from D-glyceraldehyde 3-phosphate: step 3/5. Catalyzes the interconversion of 2-phosphoglycerate and 3-phosphoglycerate. This chain is 2,3-bisphosphoglycerate-independent phosphoglycerate mutase, found in Prochlorococcus marinus (strain NATL1A).